We begin with the raw amino-acid sequence, 284 residues long: Bifunctional protein FolD 1 (284 aa).

NADP(+)-binding positions include 166–168 and Ile-232; that span reads GAS.

The protein belongs to the tetrahydrofolate dehydrogenase/cyclohydrolase family. In terms of assembly, homodimer.

It catalyses the reaction (6R)-5,10-methylene-5,6,7,8-tetrahydrofolate + NADP(+) = (6R)-5,10-methenyltetrahydrofolate + NADPH. It carries out the reaction (6R)-5,10-methenyltetrahydrofolate + H2O = (6R)-10-formyltetrahydrofolate + H(+). It functions in the pathway one-carbon metabolism; tetrahydrofolate interconversion. Catalyzes the oxidation of 5,10-methylenetetrahydrofolate to 5,10-methenyltetrahydrofolate and then the hydrolysis of 5,10-methenyltetrahydrofolate to 10-formyltetrahydrofolate. The chain is Bifunctional protein FolD 1 from Pseudomonas savastanoi pv. phaseolicola (strain 1448A / Race 6) (Pseudomonas syringae pv. phaseolicola (strain 1448A / Race 6)).